Consider the following 47-residue polypeptide: Fasciclin-like arabinogalactan protein (47 aa).

In terms of domain architecture, FAS1 spans 1 to 47; sequence APTPATLNGLTIFAPNDEAFKATGVPDLSKLSNAPMVSLLQYHAAAR.

This sequence belongs to the fasciclin-like AGP family.

Functionally, may be a cell surface adhesion protein. The sequence is that of Fasciclin-like arabinogalactan protein from Jatropha curcas (Barbados nut).